A 240-amino-acid polypeptide reads, in one-letter code: Sugar fermentation stimulation protein homolog (240 aa).

Belongs to the SfsA family.

The polypeptide is Sugar fermentation stimulation protein homolog (Saccharolobus solfataricus (strain ATCC 35092 / DSM 1617 / JCM 11322 / P2) (Sulfolobus solfataricus)).